The primary structure comprises 98 residues: Small ribosomal subunit protein bS6c (98 aa).

Belongs to the bacterial ribosomal protein bS6 family.

The protein localises to the plastid. The protein resides in the chloroplast. Functionally, binds together with bS18 to 16S ribosomal RNA. This is Small ribosomal subunit protein bS6c from Phaeodactylum tricornutum (strain CCAP 1055/1).